A 227-amino-acid chain; its full sequence is Orotidine 5'-phosphate decarboxylase (227 aa).

Substrate is bound by residues Asp8, Lys30, 57 to 66 (DLKFHDIPNT), Thr116, Arg177, Gln186, Gly206, and Arg207. Residue Lys59 is the Proton donor of the active site.

This sequence belongs to the OMP decarboxylase family. Type 1 subfamily. As to quaternary structure, homodimer.

The enzyme catalyses orotidine 5'-phosphate + H(+) = UMP + CO2. Its pathway is pyrimidine metabolism; UMP biosynthesis via de novo pathway; UMP from orotate: step 2/2. Functionally, catalyzes the decarboxylation of orotidine 5'-monophosphate (OMP) to uridine 5'-monophosphate (UMP). This Acinetobacter baumannii (strain AB307-0294) protein is Orotidine 5'-phosphate decarboxylase.